Here is a 92-residue protein sequence, read N- to C-terminus: Conotoxin Mr15.2 (92 aa).

Residues 1-20 form the signal peptide; the sequence is MSTLKMMLLILLLLLPMATF. Residues 21–53 constitute a propeptide that is removed on maturation; that stretch reads DSDGQAIPGGGIPSAVNSRVGGDEKSGRSLEKR. A disordered region spans residues 30-49; sequence GGIPSAVNSRVGGDEKSGRS.

This sequence belongs to the conotoxin N superfamily. In terms of processing, contains 4 disulfide bonds. As to expression, expressed by the venom duct.

The protein localises to the secreted. This Conus marmoreus (Marble cone) protein is Conotoxin Mr15.2.